We begin with the raw amino-acid sequence, 198 residues long: Imidazoleglycerol-phosphate dehydratase (198 aa).

This sequence belongs to the imidazoleglycerol-phosphate dehydratase family.

The protein localises to the cytoplasm. The catalysed reaction is D-erythro-1-(imidazol-4-yl)glycerol 3-phosphate = 3-(imidazol-4-yl)-2-oxopropyl phosphate + H2O. It functions in the pathway amino-acid biosynthesis; L-histidine biosynthesis; L-histidine from 5-phospho-alpha-D-ribose 1-diphosphate: step 6/9. The protein is Imidazoleglycerol-phosphate dehydratase of Methylobacillus flagellatus (strain ATCC 51484 / DSM 6875 / VKM B-1610 / KT).